A 407-amino-acid chain; its full sequence is MSSNPSLFSRIIHGSLVLQIIVGIALAVILASVSASAASQVAFLGDFFVGALKAIAPILVFVLVASSIANQKKNSHTNMRPIISLYLIGTFAAALTAVLLSFSFPTTLVLVTGIEGSNPPQGIAEVLNTLLFKLVDNPVNALMTGNYIGILAWGIGLGIALHHGTDATKAVLNDISHGVSQMVRFVIRLAPLGIFGLVAGTVAATGFDALAGYAQLLMVLVGAMLIMALVVNPLIVYLKIKRNPYPLVLKCLRGSGVTAFFTRSSAANIPVNMALCEELKLHEDTYSVSIPLGATVNMGGAAITITVLTLAAAHTLGVQVDFVTALLLSVMASVAACGASGVAGGSLLLIPLACSLFGISNDIAMQVVAVGFIIGVVQDSAETALNSSTDVLFTAAACEAAEAKANS.

The next 9 helical transmembrane spans lie at 11-31 (IIHGSLVLQIIVGIALAVILA), 43-63 (FLGDFFVGALKAIAPILVFVL), 82-102 (IISLYLIGTFAAALTAVLLSF), 141-161 (ALMTGNYIGILAWGIGLGIAL), 192-212 (LGIFGLVAGTVAATGFDALAG), 216-236 (LLMVLVGAMLIMALVVNPLIV), 298-318 (MGGAAITITVLTLAAAHTLGV), 339-359 (ASGVAGGSLLLIPLACSLFGI), and 363-383 (IAMQVVAVGFIIGVVQDSAET).

It belongs to the dicarboxylate/amino acid:cation symporter (DAACS) (TC 2.A.23) family.

Its subcellular location is the cell inner membrane. It carries out the reaction L-serine(in) + Na(+)(in) = L-serine(out) + Na(+)(out). The enzyme catalyses L-threonine(in) + Na(+)(in) = L-threonine(out) + Na(+)(out). Its function is as follows. Involved in the import of serine and threonine into the cell, with the concomitant import of sodium (symport system). In Shewanella denitrificans (strain OS217 / ATCC BAA-1090 / DSM 15013), this protein is Serine/threonine transporter SstT.